A 241-amino-acid chain; its full sequence is Penton protein H240R (241 aa).

The protein belongs to the asfivirus H240R family.

Its subcellular location is the virion. Functionally, forms the penton at the fivefold vertices of the icosahedral capsid. Together with the minor capsid proteins (p17, p49, and M1249L), forms a complicated network immediately below the outer capsid shell, stabilizing the whole capsid. This African swine fever virus (isolate Tick/Malawi/Lil 20-1/1983) (ASFV) protein is Penton protein H240R.